Reading from the N-terminus, the 404-residue chain is Tyrosine--tRNA ligase (404 aa).

The short motif at 45–54 is the 'HIGH' region element; it reads PTAPDLHLGH. A 'KMSKS' region motif is present at residues 229–233; the sequence is KMSKS. Lys232 is an ATP binding site. The 61-residue stretch at 342–402 folds into the S4 RNA-binding domain; sequence IFIASIVRLA…GKKAIAQVTF (61 aa).

It belongs to the class-I aminoacyl-tRNA synthetase family. TyrS type 2 subfamily. In terms of assembly, homodimer.

The protein resides in the cytoplasm. The enzyme catalyses tRNA(Tyr) + L-tyrosine + ATP = L-tyrosyl-tRNA(Tyr) + AMP + diphosphate + H(+). Functionally, catalyzes the attachment of tyrosine to tRNA(Tyr) in a two-step reaction: tyrosine is first activated by ATP to form Tyr-AMP and then transferred to the acceptor end of tRNA(Tyr). This chain is Tyrosine--tRNA ligase, found in Acinetobacter baylyi (strain ATCC 33305 / BD413 / ADP1).